The following is a 1385-amino-acid chain: Coiled-coil domain-containing protein 7 (1385 aa).

A coiled-coil region spans residues 299 to 330; it reads LDAEYKQMQCDFQLLSEEKLVLENELQKLKDK. The interval 329-364 is disordered; sequence DKEKTKPTNNRTKKAVKTVKKKDKGKSEDSEKKMSP. A compositionally biased stretch (basic residues) spans 339 to 352; sequence RTKKAVKTVKKKDK. Positions 353–364 are enriched in basic and acidic residues; that stretch reads GKSEDSEKKMSP. Residues 374–411 adopt a coiled-coil conformation; that stretch reads LDQVQKVARLEIENKVLQEQLKQALQEAEKAKHQLNYF. 3 disordered regions span residues 422-545, 572-752, and 809-834; these read GKTE…SKEV, TESK…EPNE, and TKKL…LKHQ. Over residues 425–436 the composition is skewed to polar residues; it reads ETTMQVGNSQTK. Composition is skewed to basic and acidic residues over residues 437-455 and 481-490; these read VKGE…RKSL and LIEKSSEKKR. 3 stretches are compositionally biased toward polar residues: residues 493–503, 511–528, and 536–545; these read PAISDLSQILK, LESS…YKSP, and LTTVSSSKEV. The segment covering 573–589 has biased composition (basic and acidic residues); that stretch reads ESKKADVSEEQLQKMTE. Positions 654–664 are enriched in polar residues; sequence RIQSETKNLKA. Composition is skewed to basic and acidic residues over residues 665–676 and 685–697; these read TRNESFHSHNDV and QDTK…EVKK. Residues 701 to 711 are compositionally biased toward polar residues; that stretch reads FQDNQLSTHNE. Positions 712 to 726 are enriched in basic and acidic residues; it reads VPNERLVVEHQESLS.

In terms of tissue distribution, expressed in epithelium of normal cervix and cervical cancer. Overexpressed in early and interim cervical cancer.

Functionally, may play a role in tumorigenesis. This is Coiled-coil domain-containing protein 7 (CCDC7) from Homo sapiens (Human).